The sequence spans 187 residues: ATP synthase subunit delta (187 aa).

The protein belongs to the ATPase delta chain family. F-type ATPases have 2 components, F(1) - the catalytic core - and F(0) - the membrane proton channel. F(1) has five subunits: alpha(3), beta(3), gamma(1), delta(1), epsilon(1). F(0) has three main subunits: a(1), b(2) and c(10-14). The alpha and beta chains form an alternating ring which encloses part of the gamma chain. F(1) is attached to F(0) by a central stalk formed by the gamma and epsilon chains, while a peripheral stalk is formed by the delta and b chains.

It localises to the cell membrane. Its function is as follows. F(1)F(0) ATP synthase produces ATP from ADP in the presence of a proton or sodium gradient. F-type ATPases consist of two structural domains, F(1) containing the extramembraneous catalytic core and F(0) containing the membrane proton channel, linked together by a central stalk and a peripheral stalk. During catalysis, ATP synthesis in the catalytic domain of F(1) is coupled via a rotary mechanism of the central stalk subunits to proton translocation. This protein is part of the stalk that links CF(0) to CF(1). It either transmits conformational changes from CF(0) to CF(1) or is implicated in proton conduction. This chain is ATP synthase subunit delta, found in Mesomycoplasma hyopneumoniae (strain J / ATCC 25934 / NCTC 10110) (Mycoplasma hyopneumoniae).